The following is a 397-amino-acid chain: Succinate--CoA ligase [ADP-forming] subunit beta (397 aa).

Residues 9–254 form the ATP-grasp domain; the sequence is KALLRSYGAP…ETEEDPKELA (246 aa). Residues lysine 46, 53-55, glutamate 109, serine 112, and glutamate 117 each bind ATP; that span reads GRG. The Mg(2+) site is built by asparagine 209 and aspartate 223. Substrate-binding positions include asparagine 274 and 331–333; that span reads GIM.

Belongs to the succinate/malate CoA ligase beta subunit family. In terms of assembly, heterotetramer of two alpha and two beta subunits. Requires Mg(2+) as cofactor.

It carries out the reaction succinate + ATP + CoA = succinyl-CoA + ADP + phosphate. The enzyme catalyses GTP + succinate + CoA = succinyl-CoA + GDP + phosphate. Its pathway is carbohydrate metabolism; tricarboxylic acid cycle; succinate from succinyl-CoA (ligase route): step 1/1. In terms of biological role, succinyl-CoA synthetase functions in the citric acid cycle (TCA), coupling the hydrolysis of succinyl-CoA to the synthesis of either ATP or GTP and thus represents the only step of substrate-level phosphorylation in the TCA. The beta subunit provides nucleotide specificity of the enzyme and binds the substrate succinate, while the binding sites for coenzyme A and phosphate are found in the alpha subunit. The chain is Succinate--CoA ligase [ADP-forming] subunit beta from Cereibacter sphaeroides (strain ATCC 17029 / ATH 2.4.9) (Rhodobacter sphaeroides).